Consider the following 559-residue polypeptide: Pentatricopeptide repeat-containing protein At4g38010 (559 aa).

12 PPR repeats span residues 70 to 104, 105 to 139, 140 to 170, 171 to 201, 203 to 233, 238 to 268, 269 to 304, 305 to 339, 340 to 370, 371 to 405, 406 to 440, and 443 to 473; these read SSFSYNTLLSSYAVCDKPRVTIFAYKTFVSNGFSP, DMFTFPPVFKACGKFSGIREGKQIHGIVTKMGFYD, DIYVQNSLVHFYGVCGESRNACKVFGEMPVR, DVVSWTGIITGFTRTGLYKEALDTFSKMDVE, NLATYVCVLVSSGRVGCLSLGKGIHGLILKR, SLETGNALIDMYVKCEQLSDAMRVFGELEKK, DKVSWNSMISGLVHCERSKEAIDLFSLMQTSSGIKP, DGHILTSVLSACASLGAVDHGRWVHEYILTAGIKW, DTHIGTAIVDMYAKCGYIETALEIFNGIRSK, NVFTWNALLGGLAIHGHGLESLRYFEEMVKLGFKP, NLVTFLAALNACCHTGLVDEGRRYFHKMKSREYNL, and KLEHYGCMIDLLCRAGLLDEALELVKAMPVK. Residues 478–554 are type E motif; it reads ICGAILSACK…VPGSSYIEKF (77 aa).

This sequence belongs to the PPR family. PCMP-E subfamily.

This chain is Pentatricopeptide repeat-containing protein At4g38010 (PCMP-E45), found in Arabidopsis thaliana (Mouse-ear cress).